A 31-amino-acid polypeptide reads, in one-letter code: Photosystem II reaction center protein T (31 aa).

An N-formylmethionine modification is found at Met-1. A helical transmembrane segment spans residues 3–23 (SVAYILVLTMALAVLFFAIAF).

Belongs to the PsbT family. In terms of assembly, PSII is composed of 1 copy each of membrane proteins PsbA, PsbB, PsbC, PsbD, PsbE, PsbF, PsbH, PsbI, PsbJ, PsbK, PsbL, PsbM, PsbT, PsbX, PsbY, PsbZ, Psb30/Ycf12, peripheral proteins PsbO, CyanoQ (PsbQ), PsbU, PsbV and a large number of cofactors. It forms dimeric complexes.

The protein localises to the cellular thylakoid membrane. Its function is as follows. Found at the monomer-monomer interface of the photosystem II (PS II) dimer, plays a role in assembly and dimerization of PSII. PSII is a light-driven water plastoquinone oxidoreductase, using light energy to abstract electrons from H(2)O, generating a proton gradient subsequently used for ATP formation. The polypeptide is Photosystem II reaction center protein T (Synechocystis sp. (strain ATCC 27184 / PCC 6803 / Kazusa)).